The chain runs to 144 residues: Transcriptional regulator MraZ (144 aa).

SpoVT-AbrB domains follow at residues 6 to 48 (TYTP…PTDV) and 77 to 120 (ADEG…DPVR).

The protein belongs to the MraZ family. As to quaternary structure, forms oligomers.

The protein localises to the cytoplasm. Its subcellular location is the nucleoid. The sequence is that of Transcriptional regulator MraZ from Nocardioides sp. (strain ATCC BAA-499 / JS614).